Consider the following 32-residue polypeptide: Variegin (32 aa).

Residues 1 to 32 form a disordered region; it reads SDQGDVAEPKMHKTAPPFDFEAIPEEYLDDES. The segment at 8–14 is contains the active site; the sequence is EPKMHKT. An O-linked (Hex) threonine glycan is attached at T14. Acidic residues predominate over residues 22-32; it reads AIPEEYLDDES.

As to quaternary structure, interacts with human F2 (thrombin); the interaction results in thrombin inhibition.

It localises to the secreted. In terms of biological role, thrombin inhibitor. Does not inhibit other serine proteases. This Amblyomma variegatum (Tropical bont tick) protein is Variegin.